The primary structure comprises 115 residues: uncharacterized protein (115 aa).

The HTH arsR-type domain maps to Met-1–Ser-91. Residues Ala-30–Asp-53 constitute a DNA-binding region (H-T-H motif).

Its function is as follows. Essential for virus function. This is an uncharacterized protein from Saccharolobus solfataricus (Sulfolobus solfataricus).